The sequence spans 293 residues: TBC1 domain family member 7 (293 aa).

The 182-residue stretch at 50–231 (PLPSMYRALV…RVWDKVVSGS (182 aa)) folds into the Rab-GAP TBC domain.

In terms of assembly, component of the TSC-TBC complex (also named Rhebulator complex), composed of 2 molecules of TSC1, 2 molecules of TSC2 and 1 molecule of TBC1D7. Interacts with TSC1 (via C-terminal half of the coiled-coil domain). Highly expressed in heart, and slightly in kidney, liver and placenta.

Its subcellular location is the lysosome membrane. It is found in the cytoplasmic vesicle. The protein localises to the cytoplasm. It localises to the cytosol. Functionally, non-catalytic component of the TSC-TBC complex, a multiprotein complex that acts as a negative regulator of the canonical mTORC1 complex, an evolutionarily conserved central nutrient sensor that stimulates anabolic reactions and macromolecule biosynthesis to promote cellular biomass generation and growth. The TSC-TBC complex acts as a GTPase-activating protein (GAP) for the small GTPase RHEB, a direct activator of the protein kinase activity of mTORC1. In absence of nutrients, the TSC-TBC complex inhibits mTORC1, thereby preventing phosphorylation of ribosomal protein S6 kinase (RPS6KB1 and RPS6KB2) and EIF4EBP1 (4E-BP1) by the mTORC1 signaling. The TSC-TBC complex is inactivated in response to nutrients, relieving inhibition of mTORC1. This chain is TBC1 domain family member 7, found in Homo sapiens (Human).